The primary structure comprises 260 residues: Vesicle-associated membrane protein 7B (260 aa).

The Cytoplasmic segment spans residues 1–189 (MPIIYSLVAR…KCAMWWKNVK (189 aa)). In terms of domain architecture, Longin spans 7–110 (LVARGSSVLA…GMNSDFSRTL (104 aa)). Positions 125–186 (TMSRTMAEID…KQLKCAMWWK (62 aa)) constitute a v-SNARE coiled-coil homology domain. A helical; Anchor for type IV membrane protein membrane pass occupies residues 190-210 (LMLVLGAIVLIIIFIIVMSYC). Topologically, residues 211-260 (DGFRSGSKCRSSPSSNSTPTPTPTETPTPTPTPTSTPTPSQLLETLLNQF) are vesicular. The interval 215-250 (SGSKCRSSPSSNSTPTPTPTETPTPTPTPTSTPTPS) is disordered. A compositionally biased stretch (pro residues) spans 230–246 (TPTPTETPTPTPTPTST).

It belongs to the synaptobrevin family.

The protein localises to the cytoplasmic vesicle. It localises to the secretory vesicle membrane. Its subcellular location is the golgi apparatus. It is found in the trans-Golgi network membrane. The protein resides in the late endosome membrane. The protein localises to the lysosome membrane. It localises to the endoplasmic reticulum membrane. Its subcellular location is the phagosome membrane. Its function is as follows. Involved in the targeting and/or fusion of transport vesicles to their target membrane during transport of proteins from the early endosome to the lysosome. Required for heterotypic fusion of late endosomes with lysosomes and homotypic lysosomal fusion. The chain is Vesicle-associated membrane protein 7B from Dictyostelium discoideum (Social amoeba).